The sequence spans 305 residues: Methionyl-tRNA formyltransferase (305 aa).

111-114 (SLLP) contributes to the (6S)-5,6,7,8-tetrahydrofolate binding site.

It belongs to the Fmt family.

The catalysed reaction is L-methionyl-tRNA(fMet) + (6R)-10-formyltetrahydrofolate = N-formyl-L-methionyl-tRNA(fMet) + (6S)-5,6,7,8-tetrahydrofolate + H(+). Its function is as follows. Attaches a formyl group to the free amino group of methionyl-tRNA(fMet). The formyl group appears to play a dual role in the initiator identity of N-formylmethionyl-tRNA by promoting its recognition by IF2 and preventing the misappropriation of this tRNA by the elongation apparatus. This is Methionyl-tRNA formyltransferase from Helicobacter pylori (strain HPAG1).